Reading from the N-terminus, the 245-residue chain is uncharacterized protein (245 aa).

The next 4 membrane-spanning stretches (helical) occupy residues 10-30 (FYTL…SPWY), 94-114 (TLAF…YVHI), 134-154 (VLIG…FLII), and 196-216 (RGWI…IYCW).

It localises to the membrane. This is an uncharacterized protein from Dictyostelium discoideum (Social amoeba).